The following is a 95-amino-acid chain: Aspartyl/glutamyl-tRNA(Asn/Gln) amidotransferase subunit C (95 aa).

This sequence belongs to the GatC family. In terms of assembly, heterotrimer of A, B and C subunits.

The enzyme catalyses L-glutamyl-tRNA(Gln) + L-glutamine + ATP + H2O = L-glutaminyl-tRNA(Gln) + L-glutamate + ADP + phosphate + H(+). It carries out the reaction L-aspartyl-tRNA(Asn) + L-glutamine + ATP + H2O = L-asparaginyl-tRNA(Asn) + L-glutamate + ADP + phosphate + 2 H(+). Allows the formation of correctly charged Asn-tRNA(Asn) or Gln-tRNA(Gln) through the transamidation of misacylated Asp-tRNA(Asn) or Glu-tRNA(Gln) in organisms which lack either or both of asparaginyl-tRNA or glutaminyl-tRNA synthetases. The reaction takes place in the presence of glutamine and ATP through an activated phospho-Asp-tRNA(Asn) or phospho-Glu-tRNA(Gln). This is Aspartyl/glutamyl-tRNA(Asn/Gln) amidotransferase subunit C from Pelodictyon phaeoclathratiforme (strain DSM 5477 / BU-1).